The primary structure comprises 422 residues: UDP-N-acetylglucosamine 1-carboxyvinyltransferase (422 aa).

22-23 (KN) is a binding site for phosphoenolpyruvate. Residue Arg-95 coordinates UDP-N-acetyl-alpha-D-glucosamine. The active-site Proton donor is the Cys-119. 2-(S-cysteinyl)pyruvic acid O-phosphothioketal is present on Cys-119. Residues 124-128 (RPIDQ), Asp-309, and Val-331 contribute to the UDP-N-acetyl-alpha-D-glucosamine site.

The protein belongs to the EPSP synthase family. MurA subfamily.

Its subcellular location is the cytoplasm. The enzyme catalyses phosphoenolpyruvate + UDP-N-acetyl-alpha-D-glucosamine = UDP-N-acetyl-3-O-(1-carboxyvinyl)-alpha-D-glucosamine + phosphate. It participates in cell wall biogenesis; peptidoglycan biosynthesis. Functionally, cell wall formation. Adds enolpyruvyl to UDP-N-acetylglucosamine. This Anaeromyxobacter sp. (strain Fw109-5) protein is UDP-N-acetylglucosamine 1-carboxyvinyltransferase.